Consider the following 563-residue polypeptide: Solute carrier family 22 member 6 (563 aa).

Residues 1–9 (MAFNDLLQQ) lie on the Cytoplasmic side of the membrane. Residues 10-30 (VGGVGRFQQIQVTLVVLPLLL) form a helical membrane-spanning segment. The Extracellular portion of the chain corresponds to 31 to 135 (MASHNTLQNF…LVCSHRALRQ (105 aa)). N-linked (GlcNAc...) asparagine glycans are attached at residues N39, N56, N92, N97, and N113. A helical membrane pass occupies residues 136-156 (LAQSLYMVGVLLGAMVFGYLA). The Cytoplasmic portion of the chain corresponds to 157–164 (DRLGRRKV). The chain crosses the membrane as a helical span at residues 165-187 (LILNYLQTAVSGTCAAFAPNFPI). Residues 188–190 (YCA) lie on the Extracellular side of the membrane. Residues 191–213 (FRLLSGMALAGISLNCMTLNVEW) traverse the membrane as a helical segment. Residues 214-224 (MPIHTRACVGT) are Cytoplasmic-facing. A helical transmembrane segment spans residues 225–245 (LIGYVYSLGQFLLAGVAYAVP). The Extracellular portion of the chain corresponds to 246 to 248 (HWR). The helical transmembrane segment at 249–269 (HLQLLVSAPFFAFFIYSWFFI) threads the bilayer. Residues 270-337 (ESARWHSSSG…ELLRCPTLRH (68 aa)) are Cytoplasmic-facing. Residues 338-358 (LFLCLSMLWFATSFAYYGLVM) form a helical membrane-spanning segment. Residues 359–368 (DLQGFGVSIY) are Extracellular-facing. A helical membrane pass occupies residues 369–389 (LIQVIFGAVDLPAKLVGFLVI). Residues 390 to 395 (NSLGRR) lie on the Cytoplasmic side of the membrane. Residues 396-416 (PAQMAALLLAGICILLNGVIP) form a helical membrane-spanning segment. At 417–425 (QDQSIVRTS) the chain is on the extracellular side. Residues 426 to 446 (LAVLGKGCLAASFNCIFLYTG) traverse the membrane as a helical segment. Residues 447–455 (ELYPTMIRQ) are Cytoplasmic-facing. A helical transmembrane segment spans residues 456-475 (TGMGMGSTMARVGSIVSPLV). Residues 476 to 484 (SMTAELYPS) are Extracellular-facing. The helical transmembrane segment at 485 to 505 (MPLFIYGAVPVAASAVTVLLP) threads the bilayer. Over 506 to 563 (ETLGQPLPDTVQDLESRWAPTQKEAGIYPRKGKQTRQQQEHQKYMVPLQASAQEKNGL) the chain is Cytoplasmic. The interval 525 to 563 (PTQKEAGIYPRKGKQTRQQQEHQKYMVPLQASAQEKNGL) is disordered.

The protein belongs to the major facilitator (TC 2.A.1) superfamily. Organic cation transporter (TC 2.A.1.19) family. In terms of processing, glycosylated. Glycosylation at Asn-113 may occur at a secondary level. Glycosylation is necessary for proper targeting of the transporter to the plasma membrane. Strongly expressed in kidney. Expressed at lower level in liver, skeletal muscle, brain and placenta. In kidney, found at the basolateral membrane of the proximal tubule. In testis, primarily localized to the basal membrane of Sertoli cells and weakly expressed in Leydig cells and vascular endothelial cells.

The protein resides in the basolateral cell membrane. The protein localises to the basal cell membrane. It carries out the reaction (6R)-L-erythro-5,6,7,8-tetrahydrobiopterin(out) + a dicarboxylate(in) = (6R)-L-erythro-5,6,7,8-tetrahydrobiopterin(in) + a dicarboxylate(out). It catalyses the reaction L-erythro-7,8-dihydrobiopterin(out) + a dicarboxylate(in) = L-erythro-7,8-dihydrobiopterin(in) + a dicarboxylate(out). The enzyme catalyses L-sepiapterin(out) + a dicarboxylate(in) = L-sepiapterin(in) + a dicarboxylate(out). The catalysed reaction is prostaglandin F2alpha(out) + a dicarboxylate(in) = prostaglandin F2alpha(in) + a dicarboxylate(out). It carries out the reaction prostaglandin E2(out) + a dicarboxylate(in) = prostaglandin E2(in) + a dicarboxylate(out). It catalyses the reaction 3',5'-cyclic AMP(out) + a dicarboxylate(in) = 3',5'-cyclic AMP(in) + a dicarboxylate(out). The enzyme catalyses 3',5'-cyclic GMP(out) + a dicarboxylate(in) = 3',5'-cyclic GMP(in) + a dicarboxylate(out). The catalysed reaction is urate(out) + a dicarboxylate(in) = urate(in) + a dicarboxylate(out). It carries out the reaction kynurenate(out) + glutarate(in) = kynurenate(in) + glutarate(out). It catalyses the reaction (indol-3-yl)acetate(out) + a dicarboxylate(in) = (indol-3-yl)acetate(in) + a dicarboxylate(out). The enzyme catalyses indoxyl sulfate(out) + a dicarboxylate(in) = indoxyl sulfate(in) + a dicarboxylate(out). The catalysed reaction is N-benzoylglycine(out) + a dicarboxylate(in) = N-benzoylglycine(in) + a dicarboxylate(out). It carries out the reaction 3-carboxy-4-methyl-5-propyl-2-furanpropanoate(out) + a dicarboxylate(in) = 3-carboxy-4-methyl-5-propyl-2-furanpropanoate(in) + a dicarboxylate(out). Functionally, secondary active transporter that functions as a Na(+)-independent organic anion (OA)/dicarboxylate antiporter where the uptake of one molecule of OA into the cell is coupled with an efflux of one molecule of intracellular dicarboxylate such as 2-oxoglutarate or glutarate. Mediates the uptake of OA across the basolateral side of proximal tubule epithelial cells, thereby contributing to the renal elimination of endogenous OA from the systemic circulation into the urine. Functions as a biopterin transporters involved in the uptake and the secretion of coenzymes tetrahydrobiopterin (BH4), dihydrobiopterin (BH2) and sepiapterin to urine, thereby determining baseline levels of blood biopterins. Transports prostaglandin E2 (PGE2) and prostaglandin F2-alpha (PGF2-alpha) and may contribute to their renal excretion. Also mediates the uptake of cyclic nucleotides such as cAMP and cGMP. Involved in the transport of neuroactive tryptophan metabolites kynurenate (KYNA) and xanthurenate (XA) and may contribute to their secretion from the brain. May transport glutamate. Also involved in the disposition of uremic toxins and potentially toxic xenobiotics by the renal organic anion secretory pathway, helping reduce their undesired toxicological effects on the body. Uremic toxins include the indoxyl sulfate (IS), hippurate/N-benzoylglycine (HA), indole acetate (IA), 3-carboxy-4- methyl-5-propyl-2-furanpropionate (CMPF) and urate. Xenobiotics include the mycotoxin ochratoxin (OTA). May also contribute to the transport of organic compounds in testes across the blood-testis-barrier. This Homo sapiens (Human) protein is Solute carrier family 22 member 6.